We begin with the raw amino-acid sequence, 147 residues long: Ribonuclease H (147 aa).

Residues 1 to 142 enclose the RNase H type-1 domain; the sequence is MKKVSIYTDG…CDKLATDEIK (142 aa). 4 residues coordinate Mg(2+): D9, E47, D69, and D134.

This sequence belongs to the RNase H family. In terms of assembly, monomer. Requires Mg(2+) as cofactor.

The protein localises to the cytoplasm. It carries out the reaction Endonucleolytic cleavage to 5'-phosphomonoester.. In terms of biological role, endonuclease that specifically degrades the RNA of RNA-DNA hybrids. This is Ribonuclease H from Acetivibrio thermocellus (strain ATCC 27405 / DSM 1237 / JCM 9322 / NBRC 103400 / NCIMB 10682 / NRRL B-4536 / VPI 7372) (Clostridium thermocellum).